The following is a 434-amino-acid chain: Cytochrome b-c1 complex subunit 2, mitochondrial (434 aa).

The N-terminal 31 residues, 1 to 31 (MYSLNRLPRSAAFKSSANLLRRNASTTSAGG), are a transit peptide targeting the mitochondrion.

This sequence belongs to the peptidase M16 family. UQCRC2/QCR2 subfamily. Component of the ubiquinol-cytochrome c oxidoreductase (cytochrome b-c1 complex, complex III, CIII), a multisubunit enzyme composed of 10 subunits. The complex is composed of 3 respiratory subunits cytochrome b (COB), cytochrome c1 (CYT1) and Rieske protein (RIP1), 2 core protein subunits COR1 and QCR2, and 5 low-molecular weight protein subunits QCR6, QCR7, QCR8, QCR9 and QCR10. The complex exists as an obligatory dimer and forms supercomplexes (SCs) in the inner mitochondrial membrane with a monomer or a dimer of cytochrome c oxidase (complex IV, CIV), resulting in 2 different assemblies (supercomplexes III(2)IV and III(2)IV(2)). Interacts with MRJ1.

It is found in the mitochondrion inner membrane. Functionally, component of the ubiquinol-cytochrome c oxidoreductase, a multisubunit transmembrane complex that is part of the mitochondrial electron transport chain which drives oxidative phosphorylation. The respiratory chain contains 3 multisubunit complexes succinate dehydrogenase (complex II, CII), ubiquinol-cytochrome c oxidoreductase (cytochrome b-c1 complex, complex III, CIII) and cytochrome c oxidase (complex IV, CIV), that cooperate to transfer electrons derived from NADH and succinate to molecular oxygen, creating an electrochemical gradient over the inner membrane that drives transmembrane transport and the ATP synthase. The cytochrome b-c1 complex catalyzes electron transfer from ubiquinol to cytochrome c, linking this redox reaction to translocation of protons across the mitochondrial inner membrane, with protons being carried across the membrane as hydrogens on the quinol. In the process called Q cycle, 2 protons are consumed from the matrix, 4 protons are released into the intermembrane space and 2 electrons are passed to cytochrome c. The polypeptide is Cytochrome b-c1 complex subunit 2, mitochondrial (Cryptococcus neoformans var. grubii serotype A (strain H99 / ATCC 208821 / CBS 10515 / FGSC 9487) (Filobasidiella neoformans var. grubii)).